A 494-amino-acid polypeptide reads, in one-letter code: BTB/POZ domain and ankyrin repeat-containing protein NH5.2 (494 aa).

One can recognise a BTB domain in the interval 25–131 (SDVAFSVEGR…LYSGQASVAA (107 aa)). Residues 60–95 (NHQPPPPPPPPLNWPTAGGGGGGSGGGGRGGAGGGG) are disordered. Residues 61 to 72 (HQPPPPPPPPLN) are compositionally biased toward pro residues. Residues 76 to 95 (AGGGGGGSGGGGRGGAGGGG) show a composition bias toward gly residues. The C2HC NPR-type zinc-finger motif lies at 137-151 (LPGCGARGCWHTRCG). Zn(2+) is bound by residues C140, C145, H147, and C150. 4 ANK repeats span residues 275–303 (NKIR…GLDL), 304–334 (DDAL…DVNS), 339–368 (TGKT…DPNS), and 372–406 (DGVT…KLRL). Disordered regions lie at residues 421-443 (DDGA…PRSD) and 471-494 (GEGR…NGFA).

It belongs to the plant 'ANKYRIN-BTB/POZ' family. 'NOOT-BOP-COCH-like' (NBCL) subfamily. Homodimer. Interacts with TGAL5, TGAL7, TGAL8 and TGAL9.

The protein localises to the nucleus. It localises to the cytoplasm. It functions in the pathway protein modification; protein ubiquitination. Its function is as follows. May act as a substrate-specific adapter of an E3 ubiquitin-protein ligase complex (CUL3-RBX1-BTB) which mediates the ubiquitination and subsequent proteasomal degradation of target proteins. Transcriptional co-regulator involved in the promotion of leaf and floral meristem fate and determinacy. Required for the abscission of senescent organs, probably by regulating the cell wall disorganization in abscission zones (AZs, e.g. pulvini at the base of leaves). This is BTB/POZ domain and ankyrin repeat-containing protein NH5.2 from Oryza sativa subsp. japonica (Rice).